Reading from the N-terminus, the 140-residue chain is Transcription antitermination protein NusB (140 aa).

The protein belongs to the NusB family.

Its function is as follows. Involved in transcription antitermination. Required for transcription of ribosomal RNA (rRNA) genes. Binds specifically to the boxA antiterminator sequence of the ribosomal RNA (rrn) operons. In Elusimicrobium minutum (strain Pei191), this protein is Transcription antitermination protein NusB.